The chain runs to 166 residues: Interleukin-2 (166 aa).

A signal peptide spans 1 to 20 (MYSMQLASCVTLTLVLLVNS). Threonine 23 carries O-linked (GalNAc...) threonine glycosylation. A disulfide bridge links cysteine 89 with cysteine 137.

It belongs to the IL-2 family.

The protein localises to the secreted. Cytokine produced by activated CD4-positive helper T-cells and to a lesser extend activated CD8-positive T-cells and natural killer (NK) cells that plays pivotal roles in the immune response and tolerance. Binds to a receptor complex composed of either the high-affinity trimeric IL-2R (IL2RA/CD25, IL2RB/CD122 and IL2RG/CD132) or the low-affinity dimeric IL-2R (IL2RB and IL2RG). Interaction with the receptor leads to oligomerization and conformation changes in the IL-2R subunits resulting in downstream signaling starting with phosphorylation of JAK1 and JAK3. In turn, JAK1 and JAK3 phosphorylate the receptor to form a docking site leading to the phosphorylation of several substrates including STAT5. This process leads to activation of several pathways including STAT, phosphoinositide-3-kinase/PI3K and mitogen-activated protein kinase/MAPK pathways. Functions as a T-cell growth factor and can increase NK-cell cytolytic activity as well. Promotes strong proliferation of activated B-cells and subsequently immunoglobulin production. Plays a pivotal role in regulating the adaptive immune system by controlling the survival and proliferation of regulatory T-cells, which are required for the maintenance of immune tolerance. Moreover, participates in the differentiation and homeostasis of effector T-cell subsets, including Th1, Th2, Th17 as well as memory CD8-positive T-cells. The chain is Interleukin-2 (Il2) from Mus spretus (Western Mediterranean mouse).